Consider the following 494-residue polypeptide: MNLGEILSSVKLPRPLAPELAQTEVTGLAYDSRRVTPGVLFFAFPGSKADGREFAADALARGAVAVISESLAPPDLAARWIQVEHGRHALALAARTFFGRPDERLGLTGITGTNGKTTTAYLTDSVLRAAGGVTAMIGTIEYHLAGRVLKAVNTTPESLDLLQIFSDLLRAGGTHVTMEVSSHALALGRVHGLNFHTAVFTNLTRDHLDFHGDMERYFAAKQMLFEGAGGNPPRFAVLNTDDEYSRRLRLHARTERLWYGMTPEADLRPRHIVSSFKGLRFDLQFRKQRFTIESPLIGKINVYNILAACATGFSYGLAPEVVARGIASLKAVPGRFERVDEGQPFVVVVDYAHTDDALRNVIAVARGLNPRRVITLFGCGGDRDRAKRPLMGKAAAEASDFVVLTSDNPRSEDPLTIMNDALVGIRRTDVAHVVEPDREAAIRRAIKEAREGDIVILAGKGHETYQVLKDKTIDFDDRAVAREVLKGYGYHQTQ.

Residue Ser-32 coordinates UDP-N-acetyl-alpha-D-muramoyl-L-alanyl-D-glutamate. Residue 112 to 118 coordinates ATP; the sequence is GTNGKTT. Residues Asn-153, 154–155, Ser-181, and Arg-189 contribute to the UDP-N-acetyl-alpha-D-muramoyl-L-alanyl-D-glutamate site; that span reads TT. Lys-221 bears the N6-carboxylysine mark. Residues Arg-383, 407–410, Gly-459, and Glu-463 contribute to the meso-2,6-diaminopimelate site; that span reads DNPR. The short motif at 407 to 410 is the Meso-diaminopimelate recognition motif element; sequence DNPR.

It belongs to the MurCDEF family. MurE subfamily. The cofactor is Mg(2+). Post-translationally, carboxylation is probably crucial for Mg(2+) binding and, consequently, for the gamma-phosphate positioning of ATP.

The protein resides in the cytoplasm. The catalysed reaction is UDP-N-acetyl-alpha-D-muramoyl-L-alanyl-D-glutamate + meso-2,6-diaminopimelate + ATP = UDP-N-acetyl-alpha-D-muramoyl-L-alanyl-gamma-D-glutamyl-meso-2,6-diaminopimelate + ADP + phosphate + H(+). It functions in the pathway cell wall biogenesis; peptidoglycan biosynthesis. Its function is as follows. Catalyzes the addition of meso-diaminopimelic acid to the nucleotide precursor UDP-N-acetylmuramoyl-L-alanyl-D-glutamate (UMAG) in the biosynthesis of bacterial cell-wall peptidoglycan. The sequence is that of UDP-N-acetylmuramoyl-L-alanyl-D-glutamate--2,6-diaminopimelate ligase from Solibacter usitatus (strain Ellin6076).